Here is a 69-residue protein sequence, read N- to C-terminus: Trypsin/subtilisin inhibitor (69 aa).

C4 and C49 are disulfide-bonded.

The protein belongs to the protease inhibitor I13 (potato type I serine protease inhibitor) family.

Inhibitor of trypsin, chymotrypsin, subtilisin, etc. The chain is Trypsin/subtilisin inhibitor from Amaranthus caudatus (Love-lies-bleeding).